The sequence spans 602 residues: Cholinesterase (602 aa).

A signal peptide spans 1–28 (MQSKGTIISIQFLLRFLLLWVLIGKSHT). The N-linked (GlcNAc...) asparagine glycan is linked to N85. An intrachain disulfide couples C93 to C120. A glycan (N-linked (GlcNAc...) asparagine) is linked at N134. 144–145 (GG) contributes to the substrate binding site. The Acyl-ester intermediate role is filled by S226. S226 carries the post-translational modification Phosphoserine. N-linked (GlcNAc...) asparagine glycans are attached at residues N269 and N284. Cysteines 280 and 291 form a disulfide. Catalysis depends on E353, which acts as the Charge relay system. A glycan (N-linked (GlcNAc...) asparagine) is linked at N369. C428 and C547 are joined by a disulfide. H466 (charge relay system) is an active-site residue. N-linked (GlcNAc...) asparagine glycosylation is found at N483, N509, N513, and N514.

This sequence belongs to the type-B carboxylesterase/lipase family. As to quaternary structure, homotetramer; disulfide-linked. Dimer of dimers.

The protein localises to the secreted. The catalysed reaction is an acylcholine + H2O = a carboxylate + choline + H(+). Its function is as follows. Esterase with broad substrate specificity. Contributes to the inactivation of the neurotransmitter acetylcholine. Can degrade neurotoxic organophosphate esters. This chain is Cholinesterase (BCHE), found in Panthera tigris tigris (Bengal tiger).